Consider the following 400-residue polypeptide: Exodeoxyribonuclease 7 large subunit (400 aa).

Belongs to the XseA family. As to quaternary structure, heterooligomer composed of large and small subunits.

Its subcellular location is the cytoplasm. It carries out the reaction Exonucleolytic cleavage in either 5'- to 3'- or 3'- to 5'-direction to yield nucleoside 5'-phosphates.. Functionally, bidirectionally degrades single-stranded DNA into large acid-insoluble oligonucleotides, which are then degraded further into small acid-soluble oligonucleotides. This chain is Exodeoxyribonuclease 7 large subunit, found in Clostridium perfringens (strain 13 / Type A).